A 95-amino-acid chain; its full sequence is CRISPR-associated endoribonuclease Cas2 (95 aa).

A Mg(2+)-binding site is contributed by Asp10.

It belongs to the CRISPR-associated endoribonuclease Cas2 protein family. Homodimer, forms a heterotetramer with a Cas1 homodimer. Mg(2+) serves as cofactor.

In terms of biological role, CRISPR (clustered regularly interspaced short palindromic repeat), is an adaptive immune system that provides protection against mobile genetic elements (viruses, transposable elements and conjugative plasmids). CRISPR clusters contain sequences complementary to antecedent mobile elements and target invading nucleic acids. CRISPR clusters are transcribed and processed into CRISPR RNA (crRNA). Functions as a ssRNA-specific endoribonuclease. Involved in the integration of spacer DNA into the CRISPR cassette. The protein is CRISPR-associated endoribonuclease Cas2 of Geobacter sulfurreducens (strain ATCC 51573 / DSM 12127 / PCA).